The sequence spans 901 residues: Cyanophycin synthetase (901 aa).

The ATP-grasp domain occupies 224-478 (KRILAASGVP…VAGAVMDMLF (255 aa)). Residue 493 to 499 (GTNGKTT) coordinates ATP.

It in the C-terminal section; belongs to the MurCDEF family. In terms of assembly, homodimer.

The catalysed reaction is [L-4-(L-arginin-2-N-yl)aspartate](n) + L-aspartate + ATP = [L-4-(L-arginin-2-N-yl)aspartate](n)-L-aspartate + ADP + phosphate + H(+). It carries out the reaction [L-4-(L-arginin-2-N-yl)aspartate](n)-L-aspartate + L-arginine + ATP = [L-4-(L-arginin-2-N-yl)aspartate](n+1) + ADP + phosphate + H(+). Its function is as follows. Catalyzes the ATP-dependent polymerization of arginine and aspartate to multi-L-arginyl-poly-L-aspartic acid (cyanophycin; a water-insoluble reserve polymer). This Nostoc sp. (strain PCC 7120 / SAG 25.82 / UTEX 2576) protein is Cyanophycin synthetase (cphA).